A 430-amino-acid chain; its full sequence is S-adenosylmethionine synthase (430 aa).

Residue His14 participates in ATP binding. Asp16 is a binding site for Mg(2+). A K(+)-binding site is contributed by Glu42. 2 residues coordinate L-methionine: Glu55 and Gln98. Positions 98–108 (QSPDINRGVER) are flexible loop. ATP contacts are provided by residues 164 to 166 (DAK), 254 to 255 (KF), Asp263, 269 to 270 (RK), Ala286, and Lys290. Asp263 contacts L-methionine. Lys294 lines the L-methionine pocket.

The protein belongs to the AdoMet synthase family. In terms of assembly, homotetramer; dimer of dimers. Requires Mg(2+) as cofactor. K(+) is required as a cofactor.

It is found in the cytoplasm. It carries out the reaction L-methionine + ATP + H2O = S-adenosyl-L-methionine + phosphate + diphosphate. The protein operates within amino-acid biosynthesis; S-adenosyl-L-methionine biosynthesis; S-adenosyl-L-methionine from L-methionine: step 1/1. Functionally, catalyzes the formation of S-adenosylmethionine (AdoMet) from methionine and ATP. The overall synthetic reaction is composed of two sequential steps, AdoMet formation and the subsequent tripolyphosphate hydrolysis which occurs prior to release of AdoMet from the enzyme. In Bacteroides thetaiotaomicron (strain ATCC 29148 / DSM 2079 / JCM 5827 / CCUG 10774 / NCTC 10582 / VPI-5482 / E50), this protein is S-adenosylmethionine synthase.